The following is a 243-amino-acid chain: Tubulin-folding cofactor B (243 aa).

The CAP-Gly domain maps to 181-223 (RAESLGPGYWVGIQYDEPLGKHDGMVKGTRFFECPRLQGGMVR).

Belongs to the TBCB family. As to quaternary structure, supercomplex made of cofactors A to E. Cofactors A and D function by capturing and stabilizing tubulin in a quasi-native conformation. Cofactor E binds to the cofactor D-tubulin complex; interaction with cofactor C then causes the release of tubulin polypeptides that are committed to the native state. Interacts with TUBA6. Expressed in roots, stems, leaves, flowers and siliques.

Its subcellular location is the cytoplasm. Functionally, involved in control of cell division. Regulates probably the availability of alpha-tubulin for dimerization of alpha-/beta-tubulin, which is required for proper microtubule biogenesis. Decreased expression of TFCB results in enlarged mesophyll cells and leaf epidermal cells with bulged nuclei, increased ploidy and increased numbers of spindles and phragmoplasts. The sequence is that of Tubulin-folding cofactor B (TFCB) from Arabidopsis thaliana (Mouse-ear cress).